The following is a 396-amino-acid chain: MKRLFTSESVTEGHPDKVADQISDAILDALIEQDPDARVAVETLVTTGLAVVAGEVTTEAYVDIQDIVRRTILDIGYTRAKYGFDGETCGVVTSIHSQSPDIALGVNKALEAKEKNDDGDEFDKIGAGDQGMMFGYATNETPEFMPLPIVLAHQLAMRLSKVRKEKIVPFLRPDGKTQVTVEYSDDGKPMRIDTILISAQHDPNVTINELKEVLLEHVIKPTIPEQYWSDNIKILVNPTGRFVLGGPSADTGLTGRKIIVDTYGGWVPHGGGAFSGKDPTKVDRSAHYMARYVAKNVVAAGLADRFMIQVAYAIGKARPVSLMIDTFSTSKVDEEKLKDVIIQLFDFRPLAIINKLNLQRPIYKKTAAYGHFGRNDPDFTWESLDAVEELKRAFNI.

H14 is a binding site for ATP. D16 is a binding site for Mg(2+). E42 is a binding site for K(+). Residues E55 and Q98 each coordinate L-methionine. The segment at Q98–K108 is flexible loop. Residues D174–K176, R241–F242, D250, R256–K257, A273, and K277 contribute to the ATP site. D250 provides a ligand contact to L-methionine. K281 contributes to the L-methionine binding site.

It belongs to the AdoMet synthase family. As to quaternary structure, homotetramer; dimer of dimers. Requires Mg(2+) as cofactor. K(+) is required as a cofactor.

It is found in the cytoplasm. It carries out the reaction L-methionine + ATP + H2O = S-adenosyl-L-methionine + phosphate + diphosphate. Its pathway is amino-acid biosynthesis; S-adenosyl-L-methionine biosynthesis; S-adenosyl-L-methionine from L-methionine: step 1/1. Its function is as follows. Catalyzes the formation of S-adenosylmethionine (AdoMet) from methionine and ATP. The overall synthetic reaction is composed of two sequential steps, AdoMet formation and the subsequent tripolyphosphate hydrolysis which occurs prior to release of AdoMet from the enzyme. This chain is S-adenosylmethionine synthase, found in Pseudothermotoga lettingae (strain ATCC BAA-301 / DSM 14385 / NBRC 107922 / TMO) (Thermotoga lettingae).